Here is a 304-residue protein sequence, read N- to C-terminus: MEQLTPLIKRFTFKRQDGQNFPRFSGGSHIIVKMNEQISNAYSLMSCTQDLSTYQVCVRKDVEGKGGSVFMHDQCNEGCEIQISEPKNLFPLAETGNKHILIAGGIGITPFLPQMDELAARGADFELHYAYRSPEHAALLDELKQKHAKHVFSYVDSEGCSLKLDELISSQPKGTHVYVCGPKPMIDAVIDCCNKHRYRDEYIHWEQFASTVPEDGEAFTVVLAKSNQEIEVQSNQTILQAIETLNIDVECLCREGVCGTCETAILEGEADHFDQYLSDAEKASQKSMMICVSRAKGKKLVLDL.

Residues 1-93 (MEQLTPLIKR…SEPKNLFPLA (93 aa)) enclose the FAD-binding FR-type domain. Residues 219 to 304 (FTVVLAKSNQ…AKGKKLVLDL (86 aa)) enclose the 2Fe-2S ferredoxin-type domain. [2Fe-2S] cluster-binding residues include Cys253, Cys258, Cys261, and Cys291.

Belongs to the PDR/VanB family. CntB subfamily. As to quaternary structure, composed of an oxygenase subunit and a reductase subunit. It depends on FMN as a cofactor. Requires [2Fe-2S] cluster as cofactor.

The catalysed reaction is (R)-carnitine + NADH + O2 + H(+) = (3R)-3-hydroxy-4-oxobutanoate + trimethylamine + NAD(+) + H2O. The enzyme catalyses (R)-carnitine + NADPH + O2 + H(+) = (3R)-3-hydroxy-4-oxobutanoate + trimethylamine + NADP(+) + H2O. It participates in amine and polyamine metabolism; carnitine metabolism. Its activity is regulated as follows. Inhibited by EDTA. Converts carnitine to trimethylamine and malic semialdehyde. Acts on both enantiomers. In Acinetobacter pittii (strain PHEA-2), this protein is Carnitine monooxygenase reductase subunit.